The sequence spans 72 residues: Translation initiation factor IF-1 (72 aa).

The S1-like domain occupies 1 to 72 (MSKEDHIEME…SKARITFRHR (72 aa)).

The protein belongs to the IF-1 family. Component of the 30S ribosomal translation pre-initiation complex which assembles on the 30S ribosome in the order IF-2 and IF-3, IF-1 and N-formylmethionyl-tRNA(fMet); mRNA recruitment can occur at any time during PIC assembly.

It is found in the cytoplasm. Functionally, one of the essential components for the initiation of protein synthesis. Stabilizes the binding of IF-2 and IF-3 on the 30S subunit to which N-formylmethionyl-tRNA(fMet) subsequently binds. Helps modulate mRNA selection, yielding the 30S pre-initiation complex (PIC). Upon addition of the 50S ribosomal subunit IF-1, IF-2 and IF-3 are released leaving the mature 70S translation initiation complex. The protein is Translation initiation factor IF-1 of Methylococcus capsulatus (strain ATCC 33009 / NCIMB 11132 / Bath).